The chain runs to 155 residues: SsrA-binding protein (155 aa).

The protein belongs to the SmpB family.

It localises to the cytoplasm. Required for rescue of stalled ribosomes mediated by trans-translation. Binds to transfer-messenger RNA (tmRNA), required for stable association of tmRNA with ribosomes. tmRNA and SmpB together mimic tRNA shape, replacing the anticodon stem-loop with SmpB. tmRNA is encoded by the ssrA gene; the 2 termini fold to resemble tRNA(Ala) and it encodes a 'tag peptide', a short internal open reading frame. During trans-translation Ala-aminoacylated tmRNA acts like a tRNA, entering the A-site of stalled ribosomes, displacing the stalled mRNA. The ribosome then switches to translate the ORF on the tmRNA; the nascent peptide is terminated with the 'tag peptide' encoded by the tmRNA and targeted for degradation. The ribosome is freed to recommence translation, which seems to be the essential function of trans-translation. The polypeptide is SsrA-binding protein (Streptococcus equi subsp. zooepidemicus (strain MGCS10565)).